We begin with the raw amino-acid sequence, 1273 residues long: DNA-directed RNA polymerase subunit beta (1273 aa).

The segment at 1252–1273 (ADDQDLVVSSNDEEVSENDERS) is disordered.

It belongs to the RNA polymerase beta chain family. As to quaternary structure, the RNAP catalytic core consists of 2 alpha, 1 beta, 1 beta' and 1 omega subunit. When a sigma factor is associated with the core the holoenzyme is formed, which can initiate transcription.

It catalyses the reaction RNA(n) + a ribonucleoside 5'-triphosphate = RNA(n+1) + diphosphate. Functionally, DNA-dependent RNA polymerase catalyzes the transcription of DNA into RNA using the four ribonucleoside triphosphates as substrates. In Dehalococcoides mccartyi (strain ATCC BAA-2100 / JCM 16839 / KCTC 5957 / BAV1), this protein is DNA-directed RNA polymerase subunit beta.